Here is a 332-residue protein sequence, read N- to C-terminus: Gibberellin 2-beta-dioxygenase (332 aa).

The Fe2OG dioxygenase domain occupies 175–280 (KSDSCFRLNH…RLSMIYFGGP (106 aa)). 3 residues coordinate Fe cation: His-204, Asp-206, and His-261. The active site involves Arg-271.

It belongs to the iron/ascorbate-dependent oxidoreductase family. GA2OX subfamily. The cofactor is Fe cation.

It catalyses the reaction gibberellin A1 + 2-oxoglutarate + O2 = gibberellin A8 + succinate + CO2. It participates in plant hormone biosynthesis; gibberellin biosynthesis. Functionally, catalyzes the 2-beta-hydroxylation of several biologically active gibberellins, leading to the homeostatic regulation of their endogenous level. Catabolism of gibberellins (GAs) plays a central role in plant development. Converts GA9/GA20 to GA51/GA29 and GA4/GA1 to GA34/GA8. In Phaseolus coccineus (Scarlet runner bean), this protein is Gibberellin 2-beta-dioxygenase (GA2OX1).